The primary structure comprises 70 residues: Antimicrobial peptide VpCT1 (70 aa).

The signal sequence occupies residues methionine 1 to alanine 23. Leucine 36 carries the leucine amide modification. Residues glycine 37–arginine 70 constitute a propeptide that is removed on maturation.

This sequence belongs to the non-disulfide-bridged peptide (NDBP) superfamily. Short antimicrobial peptide (group 4) family. As to expression, expressed by the venom gland.

The protein localises to the secreted. It is found in the target cell membrane. Functionally, antimicrobial peptide with potent activity against bacteria S.aureus (MIC=4.7 uM) and E.coli (MIC=31.5 uM), and pathogenic yeasts C.albicans (MIC=25 uM) and C.glabrata (MIC=12.5 uM). Is not very effective against P.aeruginosa (MIC=150 and &gt;300 uM). Also provokes moderate hemolysis on human erythrocytes (HC(50)=10.5 uM). This chain is Antimicrobial peptide VpCT1, found in Mesomexovis punctatus (Scorpion).